The chain runs to 333 residues: UPF0284 protein VNG_1572C (333 aa).

Belongs to the UPF0284 family.

The chain is UPF0284 protein VNG_1572C from Halobacterium salinarum (strain ATCC 700922 / JCM 11081 / NRC-1) (Halobacterium halobium).